A 140-amino-acid polypeptide reads, in one-letter code: Profilin (140 aa).

Serine 2 is modified (N-acetylserine).

This sequence belongs to the profilin family. In terms of assembly, occurs in many kinds of cells as a complex with monomeric actin in a 1:1 ratio.

The protein resides in the cytoplasm. Its subcellular location is the cytoskeleton. Its function is as follows. Binds to actin and affects the structure of the cytoskeleton. At high concentrations, profilin prevents the polymerization of actin, whereas it enhances it at low concentrations. By binding to PIP2, it inhibits the formation of IP3 and DG. This chain is Profilin, found in Heliocidaris crassispina (Sea urchin).